We begin with the raw amino-acid sequence, 394 residues long: Elongation factor Tu 1 (394 aa).

In terms of domain architecture, tr-type G spans 10 to 204 (KPHVNVGTIG…YLDSYIPEPE (195 aa)). The G1 stretch occupies residues 19–26 (GHVDHGKT). A GTP-binding site is contributed by 19–26 (GHVDHGKT). A Mg(2+)-binding site is contributed by threonine 26. The G2 stretch occupies residues 60-64 (GITIN). Residues 81 to 84 (DCPG) form a G3 region. Residues 81–85 (DCPGH) and 136–139 (NKCD) contribute to the GTP site. The segment at 136-139 (NKCD) is G4. The segment at 174-176 (SAL) is G5.

This sequence belongs to the TRAFAC class translation factor GTPase superfamily. Classic translation factor GTPase family. EF-Tu/EF-1A subfamily. In terms of assembly, monomer.

Its subcellular location is the cytoplasm. The catalysed reaction is GTP + H2O = GDP + phosphate + H(+). GTP hydrolase that promotes the GTP-dependent binding of aminoacyl-tRNA to the A-site of ribosomes during protein biosynthesis. This is Elongation factor Tu 1 from Yersinia enterocolitica serotype O:8 / biotype 1B (strain NCTC 13174 / 8081).